A 138-amino-acid chain; its full sequence is MKKPIPRIGSRRNGRIGSRKNGRRIPKGVIHVQASFNNTIVTVTDVRGRVVSWCSAGTCGFRGTRRGTPFAAQTAATNAIRTVVDQGMQRAEVMIKGPGLGRDAALRAIRRSGVLLSFVRDVTPMPHNGCRPPKKRRV.

Residues 1 to 23 (MKKPIPRIGSRRNGRIGSRKNGR) are disordered.

It belongs to the universal ribosomal protein uS11 family. Part of the 30S ribosomal subunit.

The protein resides in the plastid. The protein localises to the chloroplast. In Amborella trichopoda, this protein is Small ribosomal subunit protein uS11c.